Reading from the N-terminus, the 827-residue chain is Centrosomal protein of 95 kDa (827 aa).

Disordered regions lie at residues 115–145 (ISESSPNKSETEQYSKDSHGEEAGEDLERTE), 183–249 (GDTA…MVPS), 308–372 (FLTS…MSEK), 388–476 (LGDR…DSCH), and 489–558 (ELRK…KASP). Residues 123 to 145 (SETEQYSKDSHGEEAGEDLERTE) are compositionally biased toward basic and acidic residues. Positions 187–199 (HTFSQRSNGAQNS) are enriched in polar residues. Composition is skewed to basic and acidic residues over residues 327–343 (EATRTRKPSKGERDENR) and 360–372 (PLTEQELHAMSEK). Residues Ser-447, Ser-449, and Ser-451 each carry the phosphoserine modification. Coiled coils occupy residues 584–633 (LTKM…VKKE) and 701–795 (LQIQ…DDDA).

The protein localises to the cytoplasm. It is found in the cytoskeleton. It localises to the microtubule organizing center. Its subcellular location is the centrosome. The protein resides in the spindle pole. This chain is Centrosomal protein of 95 kDa (Cep95), found in Mus musculus (Mouse).